Consider the following 188-residue polypeptide: Multiple organellar RNA editing factor 7, mitochondrial (188 aa).

The transit peptide at 1 to 20 (MARIIRRPLNLTAAVRFRLS) directs the protein to the mitochondrion. The segment at 169-188 (DAKSGVVKKKHRRKRKKKLI) is disordered. The span at 174 to 188 (VVKKKHRRKRKKKLI) shows a compositional bias: basic residues.

The protein belongs to the MORF family. As to quaternary structure, heterodimers with MORF8/RIP1, MORF5/RIP5 and MORF6/RIP6.

The protein localises to the mitochondrion. Functionally, involved in organellar RNA editing. Required for the processing of few RNA editing sites in mitochondria. The polypeptide is Multiple organellar RNA editing factor 7, mitochondrial (Arabidopsis thaliana (Mouse-ear cress)).